Here is a 177-residue protein sequence, read N- to C-terminus: Large ribosomal subunit protein uL6 (177 aa).

It belongs to the universal ribosomal protein uL6 family. Part of the 50S ribosomal subunit.

Functionally, this protein binds to the 23S rRNA, and is important in its secondary structure. It is located near the subunit interface in the base of the L7/L12 stalk, and near the tRNA binding site of the peptidyltransferase center. This chain is Large ribosomal subunit protein uL6, found in Pseudomonas paraeruginosa (strain DSM 24068 / PA7) (Pseudomonas aeruginosa (strain PA7)).